The sequence spans 441 residues: Queuine tRNA-ribosyltransferase accessory subunit 2 (441 aa).

4 residues coordinate Zn(2+): Cys307, Cys309, Cys312, and His338.

It belongs to the queuine tRNA-ribosyltransferase family. QTRT2 subfamily. In terms of assembly, heterodimer of a catalytic subunit and an accessory subunit. Zn(2+) serves as cofactor.

The protein resides in the cytoplasm. In terms of biological role, non-catalytic subunit of the queuine tRNA-ribosyltransferase (TGT) that catalyzes the base-exchange of a guanine (G) residue with queuine (Q) at position 34 (anticodon wobble position) in tRNAs with GU(N) anticodons (tRNA-Asp, -Asn, -His and -Tyr), resulting in the hypermodified nucleoside queuosine (7-(((4,5-cis-dihydroxy-2-cyclopenten-1-yl)amino)methyl)-7-deazaguanosine). This is Queuine tRNA-ribosyltransferase accessory subunit 2 (qtr2) from Schizosaccharomyces pombe (strain 972 / ATCC 24843) (Fission yeast).